The primary structure comprises 503 residues: DEAD-box ATP-dependent RNA helicase CshA (503 aa).

A Q motif motif is present at residues 2–30 (QNFKELGISDKTVETLEAMGFKEPTPIQK). The Helicase ATP-binding domain occupies 33 to 203 (IPYTLEGKDI…QQFMKSPQIV (171 aa)). 46 to 53 (AQTGTGKT) contributes to the ATP binding site. A DEAD box motif is present at residues 150–153 (DEAD). The Helicase C-terminal domain occupies 214 to 375 (QIDEYYTIVK…LRPPHRKEVL (162 aa)). The disordered stretch occupies residues 436–503 (EKPLARKNRQ…KGRTFADLQK (68 aa)). A compositionally biased stretch (basic residues) spans 466-480 (KRSKGNFNKKKGKKT). Over residues 481 to 490 (DRRERQDKGR) the composition is skewed to basic and acidic residues.

This sequence belongs to the DEAD box helicase family. CshA subfamily. As to quaternary structure, oligomerizes, may be a member of the RNA degradosome.

It localises to the cytoplasm. The catalysed reaction is ATP + H2O = ADP + phosphate + H(+). DEAD-box RNA helicase possibly involved in RNA degradation. Unwinds dsRNA in both 5'- and 3'-directions, has RNA-dependent ATPase activity. The protein is DEAD-box ATP-dependent RNA helicase CshA of Staphylococcus haemolyticus (strain JCSC1435).